The primary structure comprises 147 residues: Nucleoside diphosphate kinase (147 aa).

Residues lysine 9, phenylalanine 57, arginine 85, threonine 91, arginine 102, and asparagine 112 each contribute to the ATP site. Histidine 115 acts as the Pros-phosphohistidine intermediate in catalysis.

Belongs to the NDK family. As to quaternary structure, homotetramer. Requires Mg(2+) as cofactor.

The protein localises to the cytoplasm. It carries out the reaction a 2'-deoxyribonucleoside 5'-diphosphate + ATP = a 2'-deoxyribonucleoside 5'-triphosphate + ADP. The enzyme catalyses a ribonucleoside 5'-diphosphate + ATP = a ribonucleoside 5'-triphosphate + ADP. Its function is as follows. Major role in the synthesis of nucleoside triphosphates other than ATP. The ATP gamma phosphate is transferred to the NDP beta phosphate via a ping-pong mechanism, using a phosphorylated active-site intermediate. The polypeptide is Nucleoside diphosphate kinase (Listeria monocytogenes serotype 4b (strain F2365)).